The chain runs to 258 residues: UPF0246 protein VP0504 (258 aa).

This sequence belongs to the UPF0246 family.

The sequence is that of UPF0246 protein VP0504 from Vibrio parahaemolyticus serotype O3:K6 (strain RIMD 2210633).